A 447-amino-acid chain; its full sequence is Glutamate--tRNA ligase 1 (447 aa).

Positions 10–20 match the 'HIGH' region motif; that stretch reads PSPTGMLHVGN. The 'KMSKS' region motif lies at 240–244; sequence KISKR. K243 lines the ATP pocket.

It belongs to the class-I aminoacyl-tRNA synthetase family. Glutamate--tRNA ligase type 1 subfamily. As to quaternary structure, monomer.

It localises to the cytoplasm. It catalyses the reaction tRNA(Glu) + L-glutamate + ATP = L-glutamyl-tRNA(Glu) + AMP + diphosphate. In terms of biological role, catalyzes the attachment of glutamate to tRNA(Glu) in a two-step reaction: glutamate is first activated by ATP to form Glu-AMP and then transferred to the acceptor end of tRNA(Glu). This chain is Glutamate--tRNA ligase 1, found in Rickettsia prowazekii (strain Madrid E).